The sequence spans 279 residues: 2-dehydro-3-deoxyphosphooctonate aldolase (279 aa).

This sequence belongs to the KdsA family.

The protein resides in the cytoplasm. The enzyme catalyses D-arabinose 5-phosphate + phosphoenolpyruvate + H2O = 3-deoxy-alpha-D-manno-2-octulosonate-8-phosphate + phosphate. The protein operates within carbohydrate biosynthesis; 3-deoxy-D-manno-octulosonate biosynthesis; 3-deoxy-D-manno-octulosonate from D-ribulose 5-phosphate: step 2/3. It functions in the pathway bacterial outer membrane biogenesis; lipopolysaccharide biosynthesis. In Methylobacillus flagellatus (strain ATCC 51484 / DSM 6875 / VKM B-1610 / KT), this protein is 2-dehydro-3-deoxyphosphooctonate aldolase.